The sequence spans 339 residues: Phosphoribosylformylglycinamidine cyclo-ligase (339 aa).

It belongs to the AIR synthase family.

The protein localises to the cytoplasm. It catalyses the reaction 2-formamido-N(1)-(5-O-phospho-beta-D-ribosyl)acetamidine + ATP = 5-amino-1-(5-phospho-beta-D-ribosyl)imidazole + ADP + phosphate + H(+). It participates in purine metabolism; IMP biosynthesis via de novo pathway; 5-amino-1-(5-phospho-D-ribosyl)imidazole from N(2)-formyl-N(1)-(5-phospho-D-ribosyl)glycinamide: step 2/2. The sequence is that of Phosphoribosylformylglycinamidine cyclo-ligase from Methanobrevibacter smithii (strain ATCC 35061 / DSM 861 / OCM 144 / PS).